The following is a 303-amino-acid chain: UDP-3-O-acyl-N-acetylglucosamine deacetylase (303 aa).

3 residues coordinate Zn(2+): His78, His237, and Asp241. The Proton donor role is filled by His264.

Belongs to the LpxC family. Zn(2+) is required as a cofactor.

The catalysed reaction is a UDP-3-O-[(3R)-3-hydroxyacyl]-N-acetyl-alpha-D-glucosamine + H2O = a UDP-3-O-[(3R)-3-hydroxyacyl]-alpha-D-glucosamine + acetate. It functions in the pathway glycolipid biosynthesis; lipid IV(A) biosynthesis; lipid IV(A) from (3R)-3-hydroxytetradecanoyl-[acyl-carrier-protein] and UDP-N-acetyl-alpha-D-glucosamine: step 2/6. Its function is as follows. Catalyzes the hydrolysis of UDP-3-O-myristoyl-N-acetylglucosamine to form UDP-3-O-myristoylglucosamine and acetate, the committed step in lipid A biosynthesis. This is UDP-3-O-acyl-N-acetylglucosamine deacetylase from Chromohalobacter salexigens (strain ATCC BAA-138 / DSM 3043 / CIP 106854 / NCIMB 13768 / 1H11).